A 536-amino-acid polypeptide reads, in one-letter code: Heparanase-like protein 3 (536 aa).

An N-terminal signal peptide occupies residues 1-24 (MAYRQILAIVLFLCVFQFLDCTVS). N-linked (GlcNAc...) asparagine glycosylation is found at asparagine 30, asparagine 122, asparagine 176, and asparagine 191. Glutamate 202 serves as the catalytic Proton donor. 2 N-linked (GlcNAc...) asparagine glycosylation sites follow: asparagine 265 and asparagine 308. Glutamate 319 (nucleophile) is an active-site residue. N-linked (GlcNAc...) asparagine glycosylation is found at asparagine 370, asparagine 427, asparagine 438, and asparagine 510.

Belongs to the glycosyl hydrolase 79 family.

It localises to the lysosome membrane. The protein localises to the secreted. Endoglycosidase which is a cell surface and extracellular matrix-degrading enzyme. Cleaves heparan sulfate proteoglycans (HSPGs) into heparan sulfate side chains and core proteoglycans. In Arabidopsis thaliana (Mouse-ear cress), this protein is Heparanase-like protein 3.